We begin with the raw amino-acid sequence, 614 residues long: uncharacterized protein (614 aa).

A run of 4 helical transmembrane segments spans residues 41–61 (GWIFLLAILTVGTGVMEAVLF), 87–107 (LIGMAALLLISIVWGFLASAV), 157–177 (DTVLTLANMFVYVLVYFITSG), and 178–198 (VVLVALDSWFLLPFITWIILF). Residues 43-330 (IFLLAILTVG…IMWESARLFE (288 aa)) form the ABC transmembrane type-1 domain. An ABC transporter domain is found at 364 to 603 (IKFNDITFAY…NGLYAKLWNH (240 aa)). 397–404 (GRSGAGKS) contacts ATP.

This sequence belongs to the ABC transporter superfamily.

Its subcellular location is the cell membrane. This is an uncharacterized protein from Haemophilus influenzae (strain ATCC 51907 / DSM 11121 / KW20 / Rd).